Here is a 541-residue protein sequence, read N- to C-terminus: Chaperonin GroEL (541 aa).

ATP is bound by residues 29–32 (TLGP), 86–90 (DGTTT), G413, 478–480 (NAA), and D494.

This sequence belongs to the chaperonin (HSP60) family. As to quaternary structure, forms a cylinder of 14 subunits composed of two heptameric rings stacked back-to-back. Interacts with the co-chaperonin GroES.

Its subcellular location is the cytoplasm. It catalyses the reaction ATP + H2O + a folded polypeptide = ADP + phosphate + an unfolded polypeptide.. Its function is as follows. Together with its co-chaperonin GroES, plays an essential role in assisting protein folding. The GroEL-GroES system forms a nano-cage that allows encapsulation of the non-native substrate proteins and provides a physical environment optimized to promote and accelerate protein folding. This chain is Chaperonin GroEL, found in Agathobacter rectalis (strain ATCC 33656 / DSM 3377 / JCM 17463 / KCTC 5835 / VPI 0990) (Eubacterium rectale).